The chain runs to 784 residues: Toll-like receptor 2 (784 aa).

Residues 1–18 (MPHTLWMVWVLGVIISLS) form the signal peptide. Residues 19–587 (KEESSNQASL…VRLSVSECHR (569 aa)) are Extracellular-facing. Cys30 and Cys36 form a disulfide bridge. LRR repeat units lie at residues 54–77 (VKSL…RYVN), 78–101 (LQAL…SLGR), 102–125 (LEHL…PLSS), 126–150 (LKFL…HLTK), 151–175 (LRIL…GLTF), 176–199 (LEEL…SIQN), 200–223 (VSHL…LTSS), 224–250 (VECL…TNSL), 251–278 (IKKF…QISG), 279–308 (LLEL…DPGK), 309–337 (VETV…LTER), 338–361 (VKRI…HLKS), 362–388 (LEYL…AWPS), 389–414 (LQTL…TLKN), 415–437 (LTNL…WPEK), 438–457 (MKYL…CIPK), 458–478 (TLEI…NLPQ), 479–500 (LKEL…LLPM), and 501–524 (LLVL…SFHT). An N-linked (GlcNAc...) asparagine glycan is attached at Asn114. Asn199 carries N-linked (GlcNAc...) asparagine glycosylation. Cys353 and Cys382 are joined by a disulfide. Asn414 is a glycosylation site (N-linked (GlcNAc...) asparagine). Cys432 and Cys454 form a disulfide bridge. An N-linked (GlcNAc...) asparagine glycan is attached at Asn442. The LRRCT domain maps to 525–579 (LKTLEAGGNNFICSCEFLSFTQEQQALAKVLVDWPANYLCDSPSHVRGQRVQDVR). Residues 588-608 (AALVSGMCCALFLLILLMGVL) form a helical membrane-spanning segment. Topologically, residues 609-784 (CHRFHGLWYM…WVNLRAAIKS (176 aa)) are cytoplasmic. A TIR domain is found at 639–782 (ICYDAFVSYS…GFWVNLRAAI (144 aa)). Lys754 is covalently cross-linked (Glycyl lysine isopeptide (Lys-Gly) (interchain with G-Cter in ubiquitin)). Residues 761–778 (YLEWPMDEARQEGFWVNL) carry the ATG16L1-binding motif motif.

Belongs to the Toll-like receptor family. As to quaternary structure, interacts with LY96, TLR1 and TLR6 (via extracellular domain). TLR2 seems to exist in heterodimers with either TLR1 or TLR6 before stimulation by the ligand. The heterodimers form bigger oligomers in response to their corresponding ligands as well as further heterotypic associations with other receptors such as CD14 and/or CD36. Binds MYD88 (via TIR domain). Interacts with TICAM1. Interacts with CNPY3. Interacts with ATG16L1. Interacts with PPP1R11. Interacts with TICAM2. Interacts with TIRAP. Ubiquitinated at Lys-754 by PPP1R11, leading to its degradation. Deubiquitinated by USP2. In terms of processing, glycosylation of Asn-442 is critical for secretion of the N-terminal ectodomain of TLR2.

The protein resides in the membrane. The protein localises to the cytoplasmic vesicle. It is found in the phagosome membrane. Its subcellular location is the membrane raft. Its function is as follows. Cooperates with LY96 to mediate the innate immune response to bacterial lipoproteins and other microbial cell wall components. Cooperates with TLR1 or TLR6 to mediate the innate immune response to bacterial lipoproteins or lipopeptides. Acts via MYD88 and TRAF6, leading to NF-kappa-B activation, cytokine secretion and the inflammatory response. May also promote apoptosis in response to lipoproteins. Forms activation clusters composed of several receptors depending on the ligand, these clusters trigger signaling from the cell surface and subsequently are targeted to the Golgi in a lipid-raft dependent pathway. Forms the cluster TLR2:TLR6:CD14:CD36 in response to diacylated lipopeptides and TLR2:TLR1:CD14 in response to triacylated lipopeptides. The protein is Toll-like receptor 2 (TLR2) of Macaca fascicularis (Crab-eating macaque).